Consider the following 142-residue polypeptide: Hemoglobin subunit alpha-I/II (142 aa).

One can recognise a Globin domain in the interval 2-142 (VLSAADKGNV…VSTVLTSKYR (141 aa)). Ser-4 is subject to Phosphoserine. 2 positions are modified to N6-succinyllysine: Lys-8 and Lys-12. Lys-17 is subject to N6-acetyllysine; alternate. Lys-17 carries the post-translational modification N6-succinyllysine; alternate. Position 25 is a phosphotyrosine (Tyr-25). Position 36 is a phosphoserine (Ser-36). The residue at position 41 (Lys-41) is an N6-succinyllysine. Ser-50 carries the post-translational modification Phosphoserine. His-59 provides a ligand contact to O2. His-88 serves as a coordination point for heme b. Ser-103 is subject to Phosphoserine. Thr-109 bears the Phosphothreonine mark. Phosphoserine is present on Ser-125. 2 positions are modified to phosphothreonine: Thr-135 and Thr-138. Ser-139 bears the Phosphoserine mark.

This sequence belongs to the globin family. Heterotetramer of two alpha chains and two beta chains. As to expression, red blood cells.

In terms of biological role, involved in oxygen transport from the lung to the various peripheral tissues. The sequence is that of Hemoglobin subunit alpha-I/II from Bison bonasus (European bison).